A 273-amino-acid polypeptide reads, in one-letter code: Undecaprenyl-diphosphatase (273 aa).

The next 6 membrane-spanning stretches (helical) occupy residues 43–63, 82–102, 109–129, 185–205, 214–234, and 249–269; these read IGNV…CWEY, KFVL…VLLI, LFNP…ILWA, TEFS…YDVL, ADLP…FVAV, and FAWY…LGWI.

Belongs to the UppP family.

It is found in the cell inner membrane. The catalysed reaction is di-trans,octa-cis-undecaprenyl diphosphate + H2O = di-trans,octa-cis-undecaprenyl phosphate + phosphate + H(+). Functionally, catalyzes the dephosphorylation of undecaprenyl diphosphate (UPP). Confers resistance to bacitracin. The sequence is that of Undecaprenyl-diphosphatase from Laribacter hongkongensis (strain HLHK9).